A 91-amino-acid chain; its full sequence is Sm-like protein LSM36B (91 aa).

One can recognise a Sm domain in the interval 14–86 (TPADFLKSIR…VLYISTTKGT (73 aa)).

Belongs to the snRNP Sm proteins family. Component of the heptameric LSM1-LSM7 complex that forms a seven-membered ring structure with a donut shape. The LSM subunits are arranged in the order LSM1, LSM2, LSM3, LSM6, LSM5, LSM7 and LSM4. Component of the heptameric LSM2-LSM8 complex that forms a seven-membered ring structure with a donut shape. The LSM subunits are arranged in the order LSM8, LSM2, LSM3, LSM6, LSM5, LSM7 and LSM4. LSM6B subunit interacts only with its two neighboring subunits, LSM3A or LSM3B and LSM5. As to expression, expressed in roots, leaves, stems, flowers and siliques.

It is found in the cytoplasm. The protein resides in the nucleus. Functionally, component of LSM protein complexes, which are involved in RNA processing. Component of the cytoplasmic LSM1-LSM7 complex which is involved in mRNA degradation by promoting decapping and leading to accurate 5'-3' mRNA decay. The cytoplasmic LSM1-LSM7 complex regulates developmental gene expression by the decapping of specific development-related transcripts. Component of the nuclear LSM2-LSM8 complex which is involved splicing nuclear mRNAs. LSM2-LSM8 binds directly to the U6 small nuclear RNAs (snRNAs) and is essential for accurate splicing of selected development-related mRNAs through the stabilization of the spliceosomal U6 snRNA. Plays a critical role in the regulation of development-related gene expression. The polypeptide is Sm-like protein LSM36B (Arabidopsis thaliana (Mouse-ear cress)).